The following is a 316-amino-acid chain: uncharacterized protein (316 aa).

One can recognise an S4 RNA-binding domain in the interval glutamate 16 to glutamate 89. Residue aspartate 140 is part of the active site.

This sequence belongs to the pseudouridine synthase RluA family.

The enzyme catalyses a uridine in RNA = a pseudouridine in RNA. This is an uncharacterized protein from Aquifex aeolicus (strain VF5).